We begin with the raw amino-acid sequence, 134 residues long: Putative STAG3-like protein 2 (134 aa).

One can recognise an SCD domain in the interval 10 to 95 (PKVTCRDVLP…GRFKDWMVSM (86 aa)).

The protein belongs to the SCC3 family.

It localises to the nucleus. In Homo sapiens (Human), this protein is Putative STAG3-like protein 2 (STAG3L2).